The sequence spans 209 residues: Uracil phosphoribosyltransferase (209 aa).

5-phospho-alpha-D-ribose 1-diphosphate-binding positions include Arg-79, Arg-104, and Asp-131 to Ser-139. Uracil contacts are provided by residues Ile-194 and Gly-199 to Ala-201. 5-phospho-alpha-D-ribose 1-diphosphate is bound at residue Asp-200.

This sequence belongs to the UPRTase family. Mg(2+) is required as a cofactor.

The catalysed reaction is UMP + diphosphate = 5-phospho-alpha-D-ribose 1-diphosphate + uracil. It participates in pyrimidine metabolism; UMP biosynthesis via salvage pathway; UMP from uracil: step 1/1. With respect to regulation, allosterically activated by GTP. Functionally, catalyzes the conversion of uracil and 5-phospho-alpha-D-ribose 1-diphosphate (PRPP) to UMP and diphosphate. This Geobacter sp. (strain M21) protein is Uracil phosphoribosyltransferase.